Reading from the N-terminus, the 427-residue chain is MRPILLPDPPSLSTGVPDIFEQGGSHNVVRRAVVIGNGFPGSENQCIGLVRALGLSDNHLLYRVTRPKGGLNEWLHWLPVGFHKKLDFILRHIYLYSRLMLGSKQSKYISSVPSENGGNVGLASILEADVKGIVNLARQTYEKDGPLIVIACGRDTISIASSIRRLASENVFVVQIQHPRSHLNRFDMVITPRHDYYPLTLEAQEQVPRFMRSWITPREPPQDHVVLTTGALHQIDYASLRKAASAWHDEFAALPKPLVVVNIGWPRSNCRYGADLAKQLTDSLLNVLATCGSVRITLSYKTPAKVSRVIFKELGDNPKVYIWNGQEPNPYMGHLAWGDAFVVTADSVSLISEACSTGKPVYVVGADHCKWKIAEFQKSLRERGVVRSFTGFEDMSESWSYPPLNDTAEAATRIRRELAARGWSLRS.

As to quaternary structure, interacts with DRP3 and DRP3B.

It is found in the mitochondrion outer membrane. In terms of biological role, plant-specific factor involved in mitochondria fission. Is required for the correct localization of DRP3A from the cytosol to mitochondrial fission sites. Does not seem to be required for peroxisomal division. The chain is Mitochondrial fission protein ELM1 (ELM1) from Arabidopsis thaliana (Mouse-ear cress).